Here is a 381-residue protein sequence, read N- to C-terminus: Dual-specificity RNA methyltransferase RlmN (381 aa).

Glutamate 96 serves as the catalytic Proton acceptor. Residues 102–342 (TDDRGTLCVS…TRTTRGDDID (241 aa)) enclose the Radical SAM core domain. Cysteine 109 and cysteine 345 are joined by a disulfide. [4Fe-4S] cluster-binding residues include cysteine 116, cysteine 120, and cysteine 123. S-adenosyl-L-methionine contacts are provided by residues 170 to 171 (GE), serine 202, 224 to 226 (SLH), and asparagine 302. The S-methylcysteine intermediate role is filled by cysteine 345.

Belongs to the radical SAM superfamily. RlmN family. [4Fe-4S] cluster is required as a cofactor.

The protein localises to the cytoplasm. The catalysed reaction is adenosine(2503) in 23S rRNA + 2 reduced [2Fe-2S]-[ferredoxin] + 2 S-adenosyl-L-methionine = 2-methyladenosine(2503) in 23S rRNA + 5'-deoxyadenosine + L-methionine + 2 oxidized [2Fe-2S]-[ferredoxin] + S-adenosyl-L-homocysteine. It carries out the reaction adenosine(37) in tRNA + 2 reduced [2Fe-2S]-[ferredoxin] + 2 S-adenosyl-L-methionine = 2-methyladenosine(37) in tRNA + 5'-deoxyadenosine + L-methionine + 2 oxidized [2Fe-2S]-[ferredoxin] + S-adenosyl-L-homocysteine. Its function is as follows. Specifically methylates position 2 of adenine 2503 in 23S rRNA and position 2 of adenine 37 in tRNAs. m2A2503 modification seems to play a crucial role in the proofreading step occurring at the peptidyl transferase center and thus would serve to optimize ribosomal fidelity. This Pseudomonas putida (strain ATCC 700007 / DSM 6899 / JCM 31910 / BCRC 17059 / LMG 24140 / F1) protein is Dual-specificity RNA methyltransferase RlmN.